Here is a 201-residue protein sequence, read N- to C-terminus: Ribonuclease HII (201 aa).

An RNase H type-2 domain is found at 10-200 (LIEAGCDEAG…LGTDPQLEIP (191 aa)). A divalent metal cation contacts are provided by Asp16, Glu17, and Asp108.

It belongs to the RNase HII family. Requires Mn(2+) as cofactor. Mg(2+) is required as a cofactor.

The protein resides in the cytoplasm. The enzyme catalyses Endonucleolytic cleavage to 5'-phosphomonoester.. Functionally, endonuclease that specifically degrades the RNA of RNA-DNA hybrids. This is Ribonuclease HII from Phocaeicola vulgatus (strain ATCC 8482 / DSM 1447 / JCM 5826 / CCUG 4940 / NBRC 14291 / NCTC 11154) (Bacteroides vulgatus).